We begin with the raw amino-acid sequence, 211 residues long: Uridine kinase (211 aa).

G12–T19 serves as a coordination point for ATP.

The protein belongs to the uridine kinase family.

The protein localises to the cytoplasm. It carries out the reaction uridine + ATP = UMP + ADP + H(+). It catalyses the reaction cytidine + ATP = CMP + ADP + H(+). Its pathway is pyrimidine metabolism; CTP biosynthesis via salvage pathway; CTP from cytidine: step 1/3. The protein operates within pyrimidine metabolism; UMP biosynthesis via salvage pathway; UMP from uridine: step 1/1. The polypeptide is Uridine kinase (Geobacillus sp. (strain WCH70)).